A 398-amino-acid polypeptide reads, in one-letter code: MSKTIAINAGSSSLKWQLYQMPEEEVLAQGIIERIGLKDSISTVKYDGKKEEQILDIHDHTEAVKILLNDLIHFGIIAAYDEITGVGHRVVAGGELFKESVVVNDKVLEQIEELSVLAPLHNPGAAAGIRAFRDILPDITSVCVFDTSFHTSMAKHTYLYPIPQKYYTDYKVRKYGAHGTSHKYVAQEAAKMLGRPLEELKLITAHIGNGVSITANYHGKSVDTSMGFTPLAGPMMGTRSGDIDPAIIPYLIEQDPELKDAADVVNMLNKKSGLSGVSGISSDMRDIEAGLQEDNPDAVLAYNIFIDRIKKCIGQYFAVLNGADALVFTAGMGENAPLMRQDVIGGLTWFGMDIDPEKNVFGYRGEISTPESKVKVLVISTDEELCIARDVERLKNTK.

Position 8 (asparagine 8) interacts with Mg(2+). Lysine 15 contributes to the ATP binding site. Arginine 89 is a substrate binding site. The active-site Proton donor/acceptor is the aspartate 146. ATP contacts are provided by residues 206–210 (HIGNG), 283–285 (DMR), and 331–335 (GMGEN). A Mg(2+)-binding site is contributed by glutamate 383.

This sequence belongs to the acetokinase family. Homodimer. The cofactor is Mg(2+). Mn(2+) serves as cofactor.

It localises to the cytoplasm. It carries out the reaction acetate + ATP = acetyl phosphate + ADP. It participates in metabolic intermediate biosynthesis; acetyl-CoA biosynthesis; acetyl-CoA from acetate: step 1/2. Its function is as follows. Catalyzes the formation of acetyl phosphate from acetate and ATP. Can also catalyze the reverse reaction. The polypeptide is Acetate kinase (Streptococcus pyogenes serotype M28 (strain MGAS6180)).